The chain runs to 215 residues: Adenylate kinase (215 aa).

10–15 contacts ATP; sequence GAGKGT. The tract at residues 30–59 is NMP; sequence STGDMLRAAVKAGSPLGQQVKGVMDSGGLV. Residues threonine 31, arginine 36, 57–59, 85–88, and glutamine 92 each bind AMP; these read GLV and GFPR. Residues 122 to 159 form an LID region; sequence GRRVHPASGRVYHTEHNPPKVAGKDDVTGEELIQREDD. Residues arginine 123 and 132 to 133 each bind ATP; that span reads VY. AMP-binding residues include arginine 156 and arginine 167. Glycine 201 contacts ATP.

Belongs to the adenylate kinase family. Monomer.

It localises to the cytoplasm. The enzyme catalyses AMP + ATP = 2 ADP. The protein operates within purine metabolism; AMP biosynthesis via salvage pathway; AMP from ADP: step 1/1. Its function is as follows. Catalyzes the reversible transfer of the terminal phosphate group between ATP and AMP. Plays an important role in cellular energy homeostasis and in adenine nucleotide metabolism. The polypeptide is Adenylate kinase (Pseudomonas aeruginosa (strain LESB58)).